A 321-amino-acid chain; its full sequence is Mas-related G-protein coupled receptor member D (321 aa).

Over 1–8 (MNSTLDSS) the chain is Extracellular. Residue asparagine 2 is glycosylated (N-linked (GlcNAc...) asparagine). The helical transmembrane segment at 9-29 (PAPGLTISPTMDLVTWIYFSV) threads the bilayer. Threonine 30 is a topological domain (cytoplasmic). A helical membrane pass occupies residues 31–51 (FLAMATCVGGMAGNSLVIWLL). Residues 52 to 72 (SCNGMQRSPFCVYVLNLAVAD) are Extracellular-facing. Residues 73 to 93 (FLFLFCMASMLSLETGPLLIV) traverse the membrane as a helical segment. The Cytoplasmic portion of the chain corresponds to 94-146 (NISAKIYEGMRRIKYFAYTAGLSLLTAISTQRCLSVLFPIWYKCHRPRHLSSV). Residues 147–167 (VSGALWALAFLMNFLASFFCV) form a helical membrane-spanning segment. At 168–181 (QFWHPNKHQCFKVD) the chain is on the extracellular side. The helical transmembrane segment at 182–202 (IVFNSLILGIFMPVMILTSTI) threads the bilayer. Residues 203–220 (LFIRVRKNSLMQRRRPRR) lie on the Cytoplasmic side of the membrane. A helical transmembrane segment spans residues 221–241 (LYVVILTSILVFLTCSLPLGI). Over 242 to 260 (NWFLLYWVDVKRDVRLLYS) the chain is Extracellular. The chain crosses the membrane as a helical span at residues 261–281 (CVSRFSSSLSSSANPVIYFLV). The Cytoplasmic portion of the chain corresponds to 282-321 (GSQKSHRLQESLGAVLGRALRDEPEPEGRETPSTCTNDGV). A compositionally biased stretch (basic and acidic residues) spans 302–311 (RDEPEPEGRE). The tract at residues 302–321 (RDEPEPEGRETPSTCTNDGV) is disordered. Over residues 312–321 (TPSTCTNDGV) the composition is skewed to polar residues.

It belongs to the G-protein coupled receptor 1 family. Mas subfamily. In terms of tissue distribution, expressed in a subset of sensory neurons that includes nociceptors. Expressed in the subclass of non-peptidergic sensory neurons that are IB4(+) and VR1(-).

The protein resides in the cell membrane. In terms of biological role, may regulate nociceptor function and/or development, including the sensation or modulation of pain. Functions as a specific membrane receptor for beta-alanine. The receptor couples with G-protein G(q) and G(i). This is Mas-related G-protein coupled receptor member D (Mrgprd) from Mus musculus (Mouse).